A 319-amino-acid chain; its full sequence is ATP-dependent 6-phosphofructokinase (319 aa).

Position 11 (glycine 11) interacts with ATP. 21–25 (RAVVR) is a binding site for ADP. Residues 72 to 73 (RC) and 102 to 105 (GDGS) contribute to the ATP site. Aspartate 103 contributes to the Mg(2+) binding site. Residue 125–127 (TID) coordinates substrate. The active-site Proton acceptor is aspartate 127. Arginine 154 serves as a coordination point for ADP. Residues arginine 162 and 169–171 (MGR) each bind substrate. ADP-binding positions include 185-187 (GAE), arginine 211, and 213-215 (KKH). Residues glutamate 222, arginine 243, and 249–252 (HMQR) contribute to the substrate site.

This sequence belongs to the phosphofructokinase type A (PFKA) family. ATP-dependent PFK group I subfamily. Prokaryotic clade 'B1' sub-subfamily. As to quaternary structure, homotetramer. It depends on Mg(2+) as a cofactor.

It localises to the cytoplasm. The enzyme catalyses beta-D-fructose 6-phosphate + ATP = beta-D-fructose 1,6-bisphosphate + ADP + H(+). It functions in the pathway carbohydrate degradation; glycolysis; D-glyceraldehyde 3-phosphate and glycerone phosphate from D-glucose: step 3/4. Its activity is regulated as follows. Allosterically activated by ADP and other diphosphonucleosides, and allosterically inhibited by phosphoenolpyruvate. Its function is as follows. Catalyzes the phosphorylation of D-fructose 6-phosphate to fructose 1,6-bisphosphate by ATP, the first committing step of glycolysis. The protein is ATP-dependent 6-phosphofructokinase of Macrococcus caseolyticus (strain JCSC5402) (Macrococcoides caseolyticum).